The sequence spans 230 residues: uncharacterized protein (230 aa).

The region spanning 2 to 69 is the S4 RNA-binding domain; that stretch reads HRLAKIISNA…KPRLWIYYKP (68 aa). The active-site Nucleophile is the Asp102.

The protein belongs to the pseudouridine synthase RsuA family.

The catalysed reaction is a uridine in RNA = a pseudouridine in RNA. This is an uncharacterized protein from Rickettsia conorii (strain ATCC VR-613 / Malish 7).